Reading from the N-terminus, the 198-residue chain is Recombination protein RecR (198 aa).

Residues 57-72 (CSVCGHITEEDPCYIC) form a C4-type zinc finger. In terms of domain architecture, Toprim spans 80 to 175 (SVICVVEDDK…KVTRLAQGLS (96 aa)).

The protein belongs to the RecR family.

May play a role in DNA repair. It seems to be involved in an RecBC-independent recombinational process of DNA repair. It may act with RecF and RecO. The polypeptide is Recombination protein RecR (Staphylococcus carnosus (strain TM300)).